The primary structure comprises 687 residues: A-kinase anchor protein 8 (687 aa).

The interaction with MCM2 stretch occupies residues 1–195 (MEQSYGGYGA…FLRGRGQGRF (195 aa)). The segment at 1–210 (MEQSYGGYGA…SSTFIRSDPF (210 aa)) is interaction with DPY30. S72 bears the Phosphoserine mark. The tract at residues 104–124 (SKEGGRGGISSGGEGMQDRDS) is disordered. The residue at position 109 (R109) is an Asymmetric dimethylarginine; alternate. R109 carries the post-translational modification Omega-N-methylarginine; alternate. Residues 109-118 (RGGISSGGEG) are compositionally biased toward gly residues. The interaction with DDX5 stretch occupies residues 109–201 (RGGISSGGEG…QGRFQDRSNS (93 aa)). The nuclear matrix targeting site stretch occupies residues 127–152 (RFQPYESYDSRPCMPEHTPYRPSYSY). Positions 189-221 (GRGQGRFQDRSNSSTFIRSDPFMPPSASSEPLS) are disordered. S199 is subject to Phosphoserine. 2 positions are modified to omega-N-methylarginine: R233 and R277. A disordered region spans residues 278-380 (SQTRIRDWPR…KQRRRDRMRD (103 aa)). Composition is skewed to basic and acidic residues over residues 281–295 (RIRDWPRRRGFERFG) and 312–321 (PDAKLARADS). The Bipartite nuclear localization signal signature appears at 287–304 (RRRGFERFGPDNMGRKRK). K315 is covalently cross-linked (Glycyl lysine isopeptide (Lys-Gly) (interchain with G-Cter in SUMO2)). 3 positions are modified to phosphoserine: S321, S326, and S337. Acidic residues predominate over residues 322-332 (EGDLSENDDGA). Positions 336-358 (RSGDEEFRGEDDLCDSRKQRGEK) are enriched in basic and acidic residues. Residues 385–448 (RIQFACSVCK…NKKIEKRRQE (64 aa)) are involved in chromatin-binding. C2H2 AKAP95-type zinc fingers lie at residues 390-412 (CSVCKFRSFEDEEIQKHLQSKFH) and 479-502 (CLACDMLIPAQHQLLQRHLHSVDH). Residues 523–565 (SVLNNKHIVKMLEKYLKGEDPFVNETADLETEGDENLGEEKET) are involved in condensin complex recruitment. T553 bears the Phosphothreonine mark. Residue K563 forms a Glycyl lysine isopeptide (Lys-Gly) (interchain with G-Cter in SUMO2) linkage. An RII-binding region spans residues 568-585 (EVAAEVLAEVITAAVKAV). The required for interaction with MYCBP stretch occupies residues 572–589 (EVLAEVITAAVKAVEGDG). The interval 606-687 (VDTAEAGSDS…DAEAKDTPTE (82 aa)) is disordered. A compositionally biased stretch (basic and acidic residues) spans 633-648 (RNMEDMARGEAAEARN). Residues 649–666 (EAAVPAAAAGSPVPVIAI) show a composition bias toward low complexity. At S659 the chain carries Phosphoserine.

The protein belongs to the AKAP95 family. As to quaternary structure, binds to dimeric RII-alpha regulatory subunit of PKA during mitosis. Interacts (via C-terminus) with FIGN. Interacts with NCAPD2, CCND1, CCND3, MCM2, RPS6KA1, PDE4A, CASP3. Interacts with DDX5, CCNE1. Interacts with NFKB1; detetcted in the cytoplasm. Interacts with MYCBP; MYCBP is translocated to the nucleus and the interaction prevents the association of the PKA catalytic subunit leading to suppression of PKA activity. Interacts with DPY30; mediating AKAP8 association with at least the MLL4/WBP7 HMT complex. Interacts with HDAC3; increased during mitosis. Interacts with GJA1; in the nucleus and in the nuclear membrane; the nuclear association increases with progress of cell cycle G1, S and G2 phase and decreases in M phase. Phosphorylated on tyrosine residues probably by SRC subfamily protein kinases; multiple phosphorylation is leading to dissociation from nuclear structures implicated in chromatin structural changes. Widely expressed. The protein has been detected in liver, fibroblasts, granulosa, myoblast, lymphoma and Sertoli cells.

It is found in the nucleus matrix. Its subcellular location is the nucleus. It localises to the nucleolus. The protein localises to the cytoplasm. In terms of biological role, anchoring protein that mediates the subcellular compartmentation of cAMP-dependent protein kinase (PKA type II). Acts as an anchor for a PKA-signaling complex onto mitotic chromosomes, which is required for maintenance of chromosomes in a condensed form throughout mitosis. Recruits condensin complex subunit NCAPD2 to chromosomes required for chromatin condensation; the function appears to be independent from PKA-anchoring. May help to deliver cyclin D/E to CDK4 to facilitate cell cycle progression. Required for cell cycle G2/M transition and histone deacetylation during mitosis. In mitotic cells recruits HDAC3 to the vicinity of chromatin leading to deacetylation and subsequent phosphorylation at 'Ser-10' of histone H3; in this function may act redundantly with AKAP8L. Involved in nuclear retention of RPS6KA1 upon ERK activation thus inducing cell proliferation. May be involved in regulation of DNA replication by acting as scaffold for MCM2. Enhances HMT activity of the KMT2 family MLL4/WBP7 complex and is involved in transcriptional regulation. In a teratocarcinoma cell line is involved in retinoic acid-mediated induction of developmental genes implicating H3 'Lys-4' methylation. May be involved in recruitment of active CASP3 to the nucleus in apoptotic cells. May act as a carrier protein of GJA1 for its transport to the nucleus. May play a repressive role in the regulation of rDNA transcription. Preferentially binds GC-rich DNA in vitro. In cells, associates with ribosomal RNA (rRNA) chromatin, preferentially with rRNA promoter and transcribed regions. Involved in modulation of Toll-like receptor signaling. Required for the cAMP-dependent suppression of TNF-alpha in early stages of LPS-induced macrophage activation; the function probably implicates targeting of PKA to NFKB1. The polypeptide is A-kinase anchor protein 8 (Akap8) (Rattus norvegicus (Rat)).